Reading from the N-terminus, the 144-residue chain is 3-hydroxyacyl-[acyl-carrier-protein] dehydratase FabZ (144 aa).

His51 is an active-site residue.

The protein belongs to the thioester dehydratase family. FabZ subfamily.

It localises to the cytoplasm. The catalysed reaction is a (3R)-hydroxyacyl-[ACP] = a (2E)-enoyl-[ACP] + H2O. Its function is as follows. Involved in unsaturated fatty acids biosynthesis. Catalyzes the dehydration of short chain beta-hydroxyacyl-ACPs and long chain saturated and unsaturated beta-hydroxyacyl-ACPs. This chain is 3-hydroxyacyl-[acyl-carrier-protein] dehydratase FabZ, found in Lactococcus lactis subsp. cremoris (strain SK11).